We begin with the raw amino-acid sequence, 112 residues long: U-scoloptoxin(16)-Er5a (112 aa).

A signal peptide spans 1-26 (MNTVSVVQFLAVGCAVFVLYGRGVFA).

The protein belongs to the scoloptoxin-16 family. In terms of processing, contains 2 disulfide bonds. As to expression, expressed by the venom gland.

The protein localises to the secreted. This is U-scoloptoxin(16)-Er5a from Ethmostigmus rubripes (Giant centipede).